Consider the following 330-residue polypeptide: Probable xanthine dehydrogenase subunit A (330 aa).

In terms of assembly, could be composed of four subunits: PucA, PucC, PucD and PucE.

The catalysed reaction is xanthine + NAD(+) + H2O = urate + NADH + H(+). It carries out the reaction hypoxanthine + NAD(+) + H2O = xanthine + NADH + H(+). It functions in the pathway purine metabolism; hypoxanthine degradation; urate from hypoxanthine: step 1/2. The protein operates within purine metabolism; hypoxanthine degradation; urate from hypoxanthine: step 2/2. Its function is as follows. Oxidizes hypoxanthine and xanthine to uric acid. PucA subunit could exert a molybdenum cofactor recruiting function. The chain is Probable xanthine dehydrogenase subunit A (pucA) from Bacillus subtilis (strain 168).